Consider the following 814-residue polypeptide: MDADASTITPEELDFIRQRALRRFDSIVPTAGREGTEIASDIFKGRTLAIYTSGGDSQGMNSAVRSITRMAIYCGCKVYLIYEGYEGMIEGGDFIKEATWNTVSDIIQQGGTIIGSARSSEFRTREGRLKAATNLINRGIGRLVCIGGDGSLTGANTFRLEWTDLVQELVKNQRVTAAAAKKIPYIQIVGLVGSIDNDFCGTDMTIGTDSALQRIISSIDAVVATAQSHQRAFVIEVMGRHCGYLALVAALASEADFCFIPEWPAPENWRDVLCDKLSQMRSEGQRLNIIIVAEGAIDRDGKAITAEDVKTAVKEKLKYDTRVTILGHVQRGGAPSAFDRLLGCRMGAEAVFALMEMTEESEPCVISIDGNVMVRVPLLKCVERTQMVQKAMADKDWTTAVMLRGRSFQRNLETYKLLTKMRTVEKDNLSEGHKFNVAVINVGAPAGGMNAAVRSYVRMALYHQCTVYGIEDSFEGLANGSFKQFKWSDVTNWAMNGGSFLGTQKSLPTEKTMPQLAAQLKKHNIQALLLVGGFEAYHSTIILAENREKYPEFCIPMCVIPCTISNNVPGTMVSLGSDTAINEICQMIDKIKQSATGTKRRVFIVETMGGYCGYLATLSALSSGADNAYIFEEPFTVQDLSDDVDVILSKMEVGAKRYLVVRNEWADKNLTTDFVQNLFDSEGKKNFTTRVNVLGHVQQGGSPTPFDRNMGTKLAARALEFLLIQLKENLTADNKVIAKSAHTATLLGLKGRKVVFTPVQDLKKETDFEHRLPSEQWWMALRPLLRVLARHRSTVESSAILESVEEESADSHMF.

The segment at 1–420 (MDADASTITP…NLETYKLLTK (420 aa)) is N-terminal catalytic PFK domain 1. Residues G55, 118-119 (RS), and 148-151 (GDGS) contribute to the ATP site. D149 contributes to the Mg(2+) binding site. Substrate is bound by residues 194–196 (SID), R231, 238–240 (MGR), E294, R322, and 328–331 (HVQR). Catalysis depends on D196, which acts as the Proton acceptor. Residues 421 to 435 (MRTVEKDNLSEGHKF) form an interdomain linker region. The C-terminal regulatory PFK domain 2 stretch occupies residues 436–814 (NVAVINVGAP…EEESADSHMF (379 aa)). Residues K505, 563–567 (TISNN), R601, 608–610 (MGG), E664, R690, 696–699 (HVQQ), and R771 contribute to the beta-D-fructose 2,6-bisphosphate site.

The protein belongs to the phosphofructokinase type A (PFKA) family. ATP-dependent PFK group I subfamily. Eukaryotic two domain clade 'E' sub-subfamily. In terms of assembly, homotetramer. Mg(2+) serves as cofactor.

The protein localises to the cytoplasm. The enzyme catalyses beta-D-fructose 6-phosphate + ATP = beta-D-fructose 1,6-bisphosphate + ADP + H(+). It participates in carbohydrate degradation; glycolysis; D-glyceraldehyde 3-phosphate and glycerone phosphate from D-glucose: step 3/4. With respect to regulation, allosterically activated by ADP, AMP, or fructose 2,6-bisphosphate, and allosterically inhibited by ATP or citrate. In terms of biological role, catalyzes the phosphorylation of D-fructose 6-phosphate to fructose 1,6-bisphosphate by ATP, the first committing step of glycolysis. In Caenorhabditis elegans, this protein is ATP-dependent 6-phosphofructokinase 1.